The chain runs to 417 residues: UDP-N-acetylglucosamine 1-carboxyvinyltransferase (417 aa).

22–23 (KN) is a phosphoenolpyruvate binding site. A UDP-N-acetyl-alpha-D-glucosamine-binding site is contributed by Arg92. Cys116 serves as the catalytic Proton donor. A 2-(S-cysteinyl)pyruvic acid O-phosphothioketal modification is found at Cys116. Positions 304 and 326 each coordinate UDP-N-acetyl-alpha-D-glucosamine.

Belongs to the EPSP synthase family. MurA subfamily.

It localises to the cytoplasm. The enzyme catalyses phosphoenolpyruvate + UDP-N-acetyl-alpha-D-glucosamine = UDP-N-acetyl-3-O-(1-carboxyvinyl)-alpha-D-glucosamine + phosphate. It participates in cell wall biogenesis; peptidoglycan biosynthesis. In terms of biological role, cell wall formation. Adds enolpyruvyl to UDP-N-acetylglucosamine. The chain is UDP-N-acetylglucosamine 1-carboxyvinyltransferase from Syntrophotalea carbinolica (strain DSM 2380 / NBRC 103641 / GraBd1) (Pelobacter carbinolicus).